The primary structure comprises 101 residues: Small ribosomal subunit protein uS14 (101 aa).

The protein belongs to the universal ribosomal protein uS14 family. As to quaternary structure, part of the 30S ribosomal subunit. Contacts proteins S3 and S10.

Functionally, binds 16S rRNA, required for the assembly of 30S particles and may also be responsible for determining the conformation of the 16S rRNA at the A site. In Pseudomonas syringae pv. syringae (strain B728a), this protein is Small ribosomal subunit protein uS14.